The sequence spans 29 residues: Trypsin inhibitor 1 (29 aa).

3 cysteine pairs are disulfide-bonded: Cys-3/Cys-20, Cys-10/Cys-22, and Cys-16/Cys-28.

It belongs to the protease inhibitor I7 (squash-type serine protease inhibitor) family.

It is found in the secreted. Functionally, inhibits trypsin. The polypeptide is Trypsin inhibitor 1 (Momordica repens).